Reading from the N-terminus, the 463-residue chain is Bifunctional protein HldE (463 aa).

A ribokinase region spans residues 1–311 (MKQILVVGDL…EEIALILNQT (311 aa)). 191–194 (NRIE) serves as a coordination point for ATP. Aspartate 260 is a catalytic residue. The tract at residues 334-463 (FTNGCFDILH…IERIKRTCND (130 aa)) is cytidylyltransferase.

In the N-terminal section; belongs to the carbohydrate kinase PfkB family. This sequence in the C-terminal section; belongs to the cytidylyltransferase family. Homodimer.

It catalyses the reaction D-glycero-beta-D-manno-heptose 7-phosphate + ATP = D-glycero-beta-D-manno-heptose 1,7-bisphosphate + ADP + H(+). The catalysed reaction is D-glycero-beta-D-manno-heptose 1-phosphate + ATP + H(+) = ADP-D-glycero-beta-D-manno-heptose + diphosphate. Its pathway is nucleotide-sugar biosynthesis; ADP-L-glycero-beta-D-manno-heptose biosynthesis; ADP-L-glycero-beta-D-manno-heptose from D-glycero-beta-D-manno-heptose 7-phosphate: step 1/4. The protein operates within nucleotide-sugar biosynthesis; ADP-L-glycero-beta-D-manno-heptose biosynthesis; ADP-L-glycero-beta-D-manno-heptose from D-glycero-beta-D-manno-heptose 7-phosphate: step 3/4. Functionally, catalyzes the phosphorylation of D-glycero-D-manno-heptose 7-phosphate at the C-1 position to selectively form D-glycero-beta-D-manno-heptose-1,7-bisphosphate. In terms of biological role, catalyzes the ADP transfer from ATP to D-glycero-beta-D-manno-heptose 1-phosphate, yielding ADP-D-glycero-beta-D-manno-heptose. This chain is Bifunctional protein HldE, found in Helicobacter pylori (strain Shi470).